Consider the following 200-residue polypeptide: Methylthioribulose-1-phosphate dehydratase (200 aa).

2 residues coordinate Zn(2+): His90 and His92.

This sequence belongs to the aldolase class II family. MtnB subfamily. It depends on Zn(2+) as a cofactor.

The enzyme catalyses 5-(methylsulfanyl)-D-ribulose 1-phosphate = 5-methylsulfanyl-2,3-dioxopentyl phosphate + H2O. Its pathway is amino-acid biosynthesis; L-methionine biosynthesis via salvage pathway; L-methionine from S-methyl-5-thio-alpha-D-ribose 1-phosphate: step 2/6. In terms of biological role, catalyzes the dehydration of methylthioribulose-1-phosphate (MTRu-1-P) into 2,3-diketo-5-methylthiopentyl-1-phosphate (DK-MTP-1-P). This Sodalis glossinidius (strain morsitans) protein is Methylthioribulose-1-phosphate dehydratase.